The primary structure comprises 306 residues: MSAAPAPAPAAAAPRALPSRLSQFYALTKPRVVQLIVFCAFIGMVLAVPGMPSGAQWALMAVASAGIWLVAGAAAAFNCIVEQGIDAKMKRTAWRPTAKGELSNTQTLLFSALLCAAGSALLYWWVNPLTMWLTFATFVGYAVIYTVILKPLTPQNIVIGGASGAMPPVLGWAAMTGEVGPEALILFLIIFLWTPPHFWALALYRVEDYRKSGLPMLPVTHGNEFTRLQVFLYTLILFAGCLMPFVYGMSSWIYLAAAVVLSAGFCLYGFRLWRDYSDTLARKTFRFSLIHLSLLFAALLVDHYLL.

9 consecutive transmembrane segments (helical) span residues 32 to 52 (VVQL…PGMP), 57 to 77 (WALM…AAAF), 108 to 128 (LLFS…WVNP), 129 to 149 (LTMW…TVIL), 157 to 177 (IVIG…AMTG), 183 to 203 (ALIL…ALAL), 230 to 250 (VFLY…YGMS), 252 to 272 (WIYL…GFRL), and 285 to 305 (FRFS…DHYL).

Belongs to the UbiA prenyltransferase family. Protoheme IX farnesyltransferase subfamily.

It is found in the cell inner membrane. The enzyme catalyses heme b + (2E,6E)-farnesyl diphosphate + H2O = Fe(II)-heme o + diphosphate. The protein operates within porphyrin-containing compound metabolism; heme O biosynthesis; heme O from protoheme: step 1/1. In terms of biological role, converts heme B (protoheme IX) to heme O by substitution of the vinyl group on carbon 2 of heme B porphyrin ring with a hydroxyethyl farnesyl side group. The protein is Protoheme IX farnesyltransferase of Acidovorax ebreus (strain TPSY) (Diaphorobacter sp. (strain TPSY)).